A 523-amino-acid polypeptide reads, in one-letter code: MRVYQFCRPFQLFTYFLCYLLVFVKANKEKISQKNYQVCAGMYSKEDWKGKIDPFISFNLKKISGLSDESDPGLVVAIYDFQDFEHLGVQLPDEEMYYICDDYAIDIGICEEENRDEFIVQDVVYDPYTSTNRSLANPIMTFSQNEVGLHDTRYPIKETGFYCVTAFRSSTSTKFNAVVNFRNAYGQLAGTEINKLPLYGLLAVAYVVAMALYSFAFWKHKHELLPLQKYLLAFFVFLTAETIFVWAYYDLKNEKGDTAGIKVYMVFLSILTAGKVTFSFFLLLIIALGYGIVYPKLNKTLMRRCQMYGALTYAICIGFLIQSYLTDMEAPSPLILITLIPMALALIIFYYMIIRSMTKTVIYLKEQRQIVKLNMYKKLLYIIYASFLSVLAGSIVSSFIYVGMNTIDMIEKNWRSRFFVTDFWPTLVYFIVFVTIAFLWRPTDTSYMLAASQQLPTDPENVADFDLGDLQSFDDQDDASIITGERGIDEDDLNLNFTDDEEGHDNVNNHSQGHGPVSPSPTK.

Positions 1-26 (MRVYQFCRPFQLFTYFLCYLLVFVKA) are cleaved as a signal peptide. Residues 27–197 (NKEKISQKNY…LAGTEINKLP (171 aa)) lie on the Lumenal side of the membrane. An N-linked (GlcNAc...) asparagine glycan is attached at Asn132. The chain crosses the membrane as a helical span at residues 198–218 (LYGLLAVAYVVAMALYSFAFW). The Cytoplasmic segment spans residues 219–230 (KHKHELLPLQKY). The helical transmembrane segment at 231–251 (LLAFFVFLTAETIFVWAYYDL) threads the bilayer. The Lumenal segment spans residues 252–265 (KNEKGDTAGIKVYM). Residues 266 to 286 (VFLSILTAGKVTFSFFLLLII) traverse the membrane as a helical segment. Over 287 to 304 (ALGYGIVYPKLNKTLMRR) the chain is Cytoplasmic. The helical transmembrane segment at 305 to 325 (CQMYGALTYAICIGFLIQSYL) threads the bilayer. Residues 326 to 333 (TDMEAPSP) are Lumenal-facing. Residues 334-354 (LILITLIPMALALIIFYYMII) form a helical membrane-spanning segment. The Cytoplasmic portion of the chain corresponds to 355-381 (RSMTKTVIYLKEQRQIVKLNMYKKLLY). The helical transmembrane segment at 382–402 (IIYASFLSVLAGSIVSSFIYV) threads the bilayer. The Lumenal segment spans residues 403-417 (GMNTIDMIEKNWRSR). A helical transmembrane segment spans residues 418–438 (FFVTDFWPTLVYFIVFVTIAF). Residues 439-523 (LWRPTDTSYM…HGPVSPSPTK (85 aa)) lie on the Cytoplasmic side of the membrane. A Phosphoserine modification is found at Ser480. Phosphothreonine is present on residues Thr483 and Thr498. The tract at residues 483 to 523 (TGERGIDEDDLNLNFTDDEEGHDNVNNHSQGHGPVSPSPTK) is disordered. The span at 488 to 503 (IDEDDLNLNFTDDEEG) shows a compositional bias: acidic residues.

Belongs to the LU7TM family.

It localises to the golgi apparatus membrane. Its subcellular location is the early endosome membrane. The polypeptide is Membrane protein PTM1 (PTM1) (Saccharomyces cerevisiae (strain YJM789) (Baker's yeast)).